Here is a 145-residue protein sequence, read N- to C-terminus: MVLSFILVQNRQGKTRLAKWYAPYSDEEKVKLKGEVHRLVAPRDQKYQSNFVEFKRSTKIVYRRYAGLFFCVCVDATDNELAYLEAIHFFVEVLDQFFGNVCELDLVFNFYKVYAILDEVFLAGEIEETSKQVVLTRLEHLDKLE.

The protein belongs to the adaptor complexes small subunit family. Adaptor protein complex 2 (AP-2) is a heterotetramer composed of two large adaptins (alpha-type subunit apl3 and beta-type subunit apl1), a medium chain (mu-type subunit apm4) and a small adaptin (sigma-type subunit aps2).

The protein resides in the cell membrane. Its subcellular location is the membrane. It is found in the coated pit. In terms of biological role, component of the adaptor complexes which link clathrin to receptors in coated vesicles. Clathrin-associated protein complexes are believed to interact with the cytoplasmic tails of membrane proteins, leading to their selection and concentration. The sequence is that of AP-2 complex subunit sigma (aps2) from Aspergillus fumigatus (strain ATCC MYA-4609 / CBS 101355 / FGSC A1100 / Af293) (Neosartorya fumigata).